Reading from the N-terminus, the 118-residue chain is Large ribosomal subunit protein bL19 (118 aa).

Belongs to the bacterial ribosomal protein bL19 family.

In terms of biological role, this protein is located at the 30S-50S ribosomal subunit interface and may play a role in the structure and function of the aminoacyl-tRNA binding site. The chain is Large ribosomal subunit protein bL19 from Geobacter sulfurreducens (strain ATCC 51573 / DSM 12127 / PCA).